The primary structure comprises 465 residues: Putative multidrug resistance protein MdtD (465 aa).

12 helical membrane passes run 12 to 32 (LWIVAFGFFMQTLDTTIVNTA), 49 to 69 (SVIVSYVLTVAVMLPASGWLA), 72 to 92 (IGVKWVFFSAIILFTFGSLMC), 138 to 158 (FVTLPGQIGPLVGPALGGFLV), 165 to 185 (WIFLINLPVGVIGALATLLLM), 195 to 215 (FDISGFIMLAIGMATLTLALD), 219 to 239 (GLGLSPLAIAGLILCGVIALG), 267 to 287 (LVGSMSARIGSGMLPFMTPIF), 290 to 310 (IGLGFSPFHAGLMMIPMIIGS), 329 to 351 (VLVNATLLLAVVSLSLPLVAIMG), 393 to 413 (LLSMAMQLSMSIGVSTAGILL), and 430 to 450 (SAFLYSYLCMAIIIALPALIF).

This sequence belongs to the major facilitator superfamily. TCR/Tet family.

It is found in the cell inner membrane. In Yersinia pseudotuberculosis serotype I (strain IP32953), this protein is Putative multidrug resistance protein MdtD.